The primary structure comprises 211 residues: Nucleoside diphosphate kinase homolog 5 (211 aa).

Positions 13–145 are NDK; that stretch reads EKTLALIKPD…EREIRFMFPA (133 aa).

It belongs to the NDK family. Component of the axonemal radial spoke complex 1 (RS1), at least composed of spoke head proteins RSPH1, RSPH3, RSPH9 and the cilia-specific component RSPH4A or sperm-specific component RSPH6A, spoke stalk proteins RSPH14, DNAJB13, DYDC1, ROPN1L and NME5, and the anchor protein IQUB. Interacts with IQUB. As to expression, expressed in the trachea, ependymal cells and oviduct (at protein level). Expressed predominantly in germ cells of the testis. Not expressed in testicular somatic cells.

It localises to the cell projection. It is found in the cilium. The protein resides in the cytoplasm. Its subcellular location is the cytoskeleton. The protein localises to the flagellum axoneme. Functions as part of axonemal radial spoke complexes that play an important part in the motility of sperm and cilia. Does not seem to have nucleoside diphosphate kinase (NDPK) activity. Confers protection from cell death by BAX and alters the cellular levels of several antioxidant enzymes including GPX5. May play a role in spermiogenesis by increasing the ability of late-stage spermatids to eliminate reactive oxygen species. In Mus musculus (Mouse), this protein is Nucleoside diphosphate kinase homolog 5 (Nme5).